The primary structure comprises 170 residues: ATP synthase subunit b (170 aa).

Residues 30-50 (FFFVLAIFLVVLAVIGTFVVP) form a helical membrane-spanning segment.

This sequence belongs to the ATPase B chain family. As to quaternary structure, F-type ATPases have 2 components, F(1) - the catalytic core - and F(0) - the membrane proton channel. F(1) has five subunits: alpha(3), beta(3), gamma(1), delta(1), epsilon(1). F(0) has three main subunits: a(1), b(2) and c(10-14). The alpha and beta chains form an alternating ring which encloses part of the gamma chain. F(1) is attached to F(0) by a central stalk formed by the gamma and epsilon chains, while a peripheral stalk is formed by the delta and b chains.

Its subcellular location is the cell membrane. In terms of biological role, f(1)F(0) ATP synthase produces ATP from ADP in the presence of a proton or sodium gradient. F-type ATPases consist of two structural domains, F(1) containing the extramembraneous catalytic core and F(0) containing the membrane proton channel, linked together by a central stalk and a peripheral stalk. During catalysis, ATP synthesis in the catalytic domain of F(1) is coupled via a rotary mechanism of the central stalk subunits to proton translocation. Its function is as follows. Component of the F(0) channel, it forms part of the peripheral stalk, linking F(1) to F(0). In Mycobacterium marinum (strain ATCC BAA-535 / M), this protein is ATP synthase subunit b.